Consider the following 141-residue polypeptide: Hemoglobin subunit alpha-D (141 aa).

The region spanning 1 to 141 (MLTEDDKQLI…VSAVLAEKYR (141 aa)) is the Globin domain. Heme b-binding residues include histidine 58 and histidine 87.

The protein belongs to the globin family. In terms of assembly, heterotetramer of two alpha-D chains and two beta chains. Red blood cells.

Involved in oxygen transport from the lung to the various peripheral tissues. The chain is Hemoglobin subunit alpha-D (HBAD) from Chelonoidis niger (Galapagos giant tortoise).